The chain runs to 201 residues: ATP-dependent Clp protease proteolytic subunit 1 (201 aa).

The active-site Nucleophile is serine 102. Residue histidine 127 is part of the active site.

The protein belongs to the peptidase S14 family. As to quaternary structure, fourteen ClpP subunits assemble into 2 heptameric rings which stack back to back to give a disk-like structure with a central cavity, resembling the structure of eukaryotic proteasomes.

The protein resides in the cytoplasm. It catalyses the reaction Hydrolysis of proteins to small peptides in the presence of ATP and magnesium. alpha-casein is the usual test substrate. In the absence of ATP, only oligopeptides shorter than five residues are hydrolyzed (such as succinyl-Leu-Tyr-|-NHMec, and Leu-Tyr-Leu-|-Tyr-Trp, in which cleavage of the -Tyr-|-Leu- and -Tyr-|-Trp bonds also occurs).. Cleaves peptides in various proteins in a process that requires ATP hydrolysis. Has a chymotrypsin-like activity. Plays a major role in the degradation of misfolded proteins. The polypeptide is ATP-dependent Clp protease proteolytic subunit 1 (Mesorhizobium japonicum (strain LMG 29417 / CECT 9101 / MAFF 303099) (Mesorhizobium loti (strain MAFF 303099))).